Here is a 359-residue protein sequence, read N- to C-terminus: Cytosolic sulfotransferase 15 (359 aa).

3'-phosphoadenylyl sulfate is bound at residue Lys-101–Trp-106. The active-site Proton acceptor is the His-168. 3'-phosphoadenylyl sulfate contacts are provided by residues Arg-190, Ser-198, Tyr-256, and Arg-322–Gly-324.

This sequence belongs to the sulfotransferase 1 family. In terms of tissue distribution, expressed in leaves.

Its subcellular location is the cytoplasm. The catalysed reaction is a 12-hydroxyjasmonate + 3'-phosphoadenylyl sulfate = a 12-sulfojasmonate + adenosine 3',5'-bisphosphate + H(+). Sulfotransferase that utilizes 3'-phospho-5'-adenylyl sulfate (PAPS) as sulfonate donor to specifically catalyze the sulfate conjugation of hydroxyjasmonates, with a preference for 12-hydroxyjasmonate over 11-hydroxyjasmonate. No activity with 12-hydroxyjasmonic acid methyl ester, cucurbic acid, 7-iso-cucurbic acid, 6-epi-cucurbic acid, 6-epi-7-iso-cucurbic acid and their methyl esters, prostaglandin E2, arachidonyl alcohol and 11-eicosenol. This Arabidopsis thaliana (Mouse-ear cress) protein is Cytosolic sulfotransferase 15 (SOT15).